The chain runs to 100 residues: MICOS complex subunit MIC12 (100 aa).

Residues 10-26 form a helical membrane-spanning segment; it reads FATISSVAAASLYLYAI.

The protein belongs to the MICOS complex subunit Mic12 family. Component of the mitochondrial contact site and cristae organizing system (MICOS) complex.

It is found in the mitochondrion inner membrane. Component of the MICOS complex, a large protein complex of the mitochondrial inner membrane that plays crucial roles in the maintenance of crista junctions, inner membrane architecture, and formation of contact sites to the outer membrane. This is MICOS complex subunit MIC12 (AIM5) from Vanderwaltozyma polyspora (strain ATCC 22028 / DSM 70294 / BCRC 21397 / CBS 2163 / NBRC 10782 / NRRL Y-8283 / UCD 57-17) (Kluyveromyces polysporus).